Consider the following 74-residue polypeptide: MSKDIYYSDKYYDEQFEYRHVVLPKELVKMVPKTHLMTEAEWRSIGVQQSRGWIHYMIHKPEPHILLFRRPKTD.

This sequence belongs to the CKS family. Forms a homohexamer that can probably bind six kinase subunits.

Its function is as follows. Binds to the catalytic subunit of the cyclin dependent kinases Cdk1 and Cdk2, and is essential for their biological function. The sequence is that of Cyclin-dependent kinases regulatory subunit (Cks30A) from Drosophila melanogaster (Fruit fly).